A 147-amino-acid polypeptide reads, in one-letter code: Hemoglobin subunit gamma-2 (147 aa).

The Globin domain maps to 3–147; it reads HFTEEDKATI…VASALSSRYH (145 aa). Thr13 is subject to Phosphothreonine. A phosphoserine mark is found at Ser45, Ser51, and Ser53. The residue at position 60 (Lys60) is an N6-acetyllysine. Residue His64 participates in heme b binding. Position 83 is an N6-acetyllysine (Lys83). His93 provides a ligand contact to heme b. The residue at position 94 (Cys94) is an S-nitrosocysteine. Phosphoserine is present on residues Ser140, Ser143, and Ser144.

Belongs to the globin family. As to quaternary structure, heterotetramer of two alpha chains and two gamma chains in fetal hemoglobin (Hb F). As to expression, red blood cells.

Gamma chains make up the fetal hemoglobin F, in combination with alpha chains. This Gorilla gorilla gorilla (Western lowland gorilla) protein is Hemoglobin subunit gamma-2 (HBG2).